A 436-amino-acid polypeptide reads, in one-letter code: UPF0597 protein YhaM (436 aa).

The protein belongs to the UPF0597 family.

The chain is UPF0597 protein YhaM from Escherichia coli (strain K12 / MC4100 / BW2952).